The following is a 65-amino-acid chain: MSKIILAIFLIVLCGLIFVTVDAMIDAPCKDNDDCDRFTEYCAIYADENGNEAGKRCEDAIGLLV.

The signal sequence occupies residues 1 to 23 (MSKIILAIFLIVLCGLIFVTVDA).

Post-translationally, contains 2 disulfide bonds. In terms of tissue distribution, expressed by the venom gland.

It is found in the secreted. In terms of biological role, endoparasitoid venom protein that interferes with the activation of host hemolymph prophenoloxidase. May act in conjunction with other venom proteins (such as Vn50), by competitive binding to the zymogen and thereby interrupting the enzyme. The protein is Venom protein Vn4.6 of Cotesia rubecula (Cabbage white butterfly parasite).